We begin with the raw amino-acid sequence, 191 residues long: Glutathione S-transferase Y-2 (191 aa).

The 79-residue stretch at 2-80 folds into the GST N-terminal domain; sequence TFATVYIKPH…YIVAKGSKPE (79 aa). A GST C-terminal domain is found at 85–191; it reads TTEERATNTR…VSQHPIIKNM (107 aa).

It belongs to the GST superfamily.

It catalyses the reaction RX + glutathione = an S-substituted glutathione + a halide anion + H(+). In terms of biological role, conjugation of reduced glutathione to a wide number of exogenous and endogenous hydrophobic electrophiles. This chain is Glutathione S-transferase Y-2 (GSTY2), found in Pichia kudriavzevii (Yeast).